The chain runs to 503 residues: Transcription termination/antitermination protein NusA (503 aa).

In terms of domain architecture, S1 motif spans 139–203; the sequence is GDIINGIVKR…KGPQIFLSRV (65 aa). A KH domain is found at 308–378; that stretch reads SHKVEVVVSQ…LDVEEVIGQL (71 aa).

The protein belongs to the NusA family. In terms of assembly, monomer. Binds directly to the core enzyme of the DNA-dependent RNA polymerase and to nascent RNA.

Its subcellular location is the cytoplasm. Participates in both transcription termination and antitermination. The polypeptide is Transcription termination/antitermination protein NusA (Rickettsia prowazekii (strain Madrid E)).